The following is a 290-amino-acid chain: Poly-beta-1,6-N-acetyl-D-glucosamine N-deacetylase (290 aa).

A signal peptide spans 1 to 28 (MKYRKFIILVLSILIILPVSTLDGHHIA). In terms of domain architecture, NodB homology spans 114–290 (RSVWINFDDM…KRWDGFHEKD (177 aa)).

This sequence belongs to the polysaccharide deacetylase family.

It localises to the secreted. The protein localises to the cell wall. Its function is as follows. Catalyzes the N-deacetylation of poly-beta-1,6-N-acetyl-D-glucosamine (PNAG, also referred to as PIA), a biofilm adhesin polysaccharide. N-deacetylation is crucial for attachment of the polysaccharide to the bacterial cell surface; it leads to the introduction of positive charges in the otherwise neutral PIA polymer, allowing electrostatic interactions. This chain is Poly-beta-1,6-N-acetyl-D-glucosamine N-deacetylase (icaB), found in Staphylococcus aureus (strain NCTC 8325 / PS 47).